The primary structure comprises 245 residues: Dehydrogenase/reductase SDR family member 6 (245 aa).

NAD(+)-binding positions include 16-18 (QGI), Asp-37, and Asp-58. Residue Arg-144 coordinates substrate. Tyr-147 (proton acceptor) is an active-site residue. NAD(+) contacts are provided by residues Lys-151 and 180–184 (VDTPS). Residues Arg-188 and Arg-205 each contribute to the substrate site.

This sequence belongs to the short-chain dehydrogenases/reductases (SDR) family. Homotetramer. As to expression, detected in liver, spleen and macrophages. Widely expressed.

The protein resides in the cytoplasm. It carries out the reaction cis-4-hydroxy-L-proline + NAD(+) = 4-oxo-L-proline + NADH + H(+). The catalysed reaction is (R)-3-hydroxybutanoate + NAD(+) = acetoacetate + NADH + H(+). It functions in the pathway amino-acid metabolism. Its pathway is siderophore biosynthesis. NAD(H)-dependent dehydrogenase/reductase with a preference for cyclic substrates. Catalyzes stereoselective conversion of 4-oxo-L-proline to cis-4-hydroxy-L-proline, likely a detoxification mechanism for ketoprolines. Mediates the formation of 2,5-dihydroxybenzoate (2,5-DHBA), a siderophore that chelates free cytoplasmic iron and associates with LCN2, thereby regulating iron transport and homeostasis while protecting cells against free radical-induced oxidative stress. The iron-siderophore complex is imported into mitochondria, providing an iron source for mitochondrial metabolic processes in particular heme synthesis. May act as a 3-hydroxybutyrate dehydrogenase. Functionally, (Microbial infection) May play a role in susceptibility to bacterial infection by providing an assimilable source of iron that is exploited by pathogenic bacteria. Host iron-siderophore complexes can be used by bacteria to promote their own growth and pathogenicity. The chain is Dehydrogenase/reductase SDR family member 6 from Mus musculus (Mouse).